The sequence spans 202 residues: Peptide deformylase (202 aa).

Residues 1–24 form a disordered region; that stretch reads MAGSFAQLAKNAEKKKPSISVSKE. 2 residues coordinate Fe cation: Cys121 and His163. Glu164 is a catalytic residue. Position 167 (His167) interacts with Fe cation.

It belongs to the polypeptide deformylase family. It depends on Fe(2+) as a cofactor.

The catalysed reaction is N-terminal N-formyl-L-methionyl-[peptide] + H2O = N-terminal L-methionyl-[peptide] + formate. In terms of biological role, removes the formyl group from the N-terminal Met of newly synthesized proteins. Requires at least a dipeptide for an efficient rate of reaction. N-terminal L-methionine is a prerequisite for activity but the enzyme has broad specificity at other positions. The protein is Peptide deformylase of Prochlorococcus marinus (strain NATL2A).